The primary structure comprises 372 residues: Chaperone protein DnaJ (372 aa).

One can recognise a J domain in the interval 5–70 (DFYEVLGVTK…QKRAAYDRYG (66 aa)). A CR-type zinc finger spans residues 129 to 207 (GKLASLTLPT…CGGAGRVTRE (79 aa)). Positions 142, 145, 159, 162, 181, 184, 195, and 198 each coordinate Zn(2+). CXXCXGXG motif repeat units follow at residues 142-149 (CEACDGTG), 159-166 (CPTCGGQG), 181-188 (CPQCHGRG), and 195-202 (CQACGGAG).

Belongs to the DnaJ family. In terms of assembly, homodimer. It depends on Zn(2+) as a cofactor.

Its subcellular location is the cytoplasm. In terms of biological role, participates actively in the response to hyperosmotic and heat shock by preventing the aggregation of stress-denatured proteins and by disaggregating proteins, also in an autonomous, DnaK-independent fashion. Unfolded proteins bind initially to DnaJ; upon interaction with the DnaJ-bound protein, DnaK hydrolyzes its bound ATP, resulting in the formation of a stable complex. GrpE releases ADP from DnaK; ATP binding to DnaK triggers the release of the substrate protein, thus completing the reaction cycle. Several rounds of ATP-dependent interactions between DnaJ, DnaK and GrpE are required for fully efficient folding. Also involved, together with DnaK and GrpE, in the DNA replication of plasmids through activation of initiation proteins. The protein is Chaperone protein DnaJ of Beijerinckia indica subsp. indica (strain ATCC 9039 / DSM 1715 / NCIMB 8712).